The sequence spans 500 residues: NAD(P)H-quinone oxidoreductase chain 4, chloroplastic (500 aa).

15 helical membrane passes run 4 to 24, 35 to 55, 87 to 107, 113 to 130, 134 to 154, 167 to 187, 211 to 231, 242 to 262, 272 to 292, 305 to 325, 330 to 350, 364 to 384, 386 to 406, 411 to 431, and 462 to 482; these read FPWL…MLFL, YTIC…CYNF, IGTI…AFPV, LFHF…GSFS, LLLF…LLAM, FILY…GISL, ILFY…IPLH, HYST…YGLV, AHSM…IYAA, IAYS…SITD, GAIL…FLAG, MGGM…LSMA, LALP…GIIT, FLIF…LTPI, and LFLS…PDFV.

It belongs to the complex I subunit 4 family.

It localises to the plastid. It is found in the chloroplast thylakoid membrane. It catalyses the reaction a plastoquinone + NADH + (n+1) H(+)(in) = a plastoquinol + NAD(+) + n H(+)(out). The catalysed reaction is a plastoquinone + NADPH + (n+1) H(+)(in) = a plastoquinol + NADP(+) + n H(+)(out). This chain is NAD(P)H-quinone oxidoreductase chain 4, chloroplastic, found in Capsella bursa-pastoris (Shepherd's purse).